Consider the following 165-residue polypeptide: MIAKVSNKSNKSNKKEAVFKRLAENRYAKFQYEISETIEAGIELLGTEVKSIRNGNVNLRDGYCSFRDGEILLLNVHISPHKNVGSFFNHDPLRNRKLLLHKKEIFKLKSNTEKKGLTIIPLSIYLKGSWIKLTIGIGKGKKLHDKRQADKQKDIKREIKTALKR.

The protein belongs to the SmpB family.

It is found in the cytoplasm. Its function is as follows. Required for rescue of stalled ribosomes mediated by trans-translation. Binds to transfer-messenger RNA (tmRNA), required for stable association of tmRNA with ribosomes. tmRNA and SmpB together mimic tRNA shape, replacing the anticodon stem-loop with SmpB. tmRNA is encoded by the ssrA gene; the 2 termini fold to resemble tRNA(Ala) and it encodes a 'tag peptide', a short internal open reading frame. During trans-translation Ala-aminoacylated tmRNA acts like a tRNA, entering the A-site of stalled ribosomes, displacing the stalled mRNA. The ribosome then switches to translate the ORF on the tmRNA; the nascent peptide is terminated with the 'tag peptide' encoded by the tmRNA and targeted for degradation. The ribosome is freed to recommence translation, which seems to be the essential function of trans-translation. This chain is SsrA-binding protein, found in Prochlorococcus marinus (strain MIT 9515).